The following is a 130-amino-acid chain: MAKKIEKSAKKKFREKVLLGVAHIQSTFNNTIVTITTNKGNVLAWSSAGACGFKGARKKTPLAAKQAAENAAQTCVSQGMREIRVNVKGAGAGREAALRGLRDAGLNITIIRDITPIPHNGCRPPKKRRI.

It belongs to the universal ribosomal protein uS11 family. In terms of assembly, part of the 30S ribosomal subunit.

The protein resides in the plastid. Its subcellular location is the chloroplast. The chain is Small ribosomal subunit protein uS11c from Chlorella vulgaris (Green alga).